The primary structure comprises 242 residues: Terpene cyclase dpchB (242 aa).

Helical transmembrane passes span 16-36 (VVWI…ANYV), 51-71 (ALLP…MYAF), 78-95 (YVHF…YTAV), 114-134 (LIFV…AKQV), 141-161 (AWSA…QLLC), 169-189 (SYFL…QDII), and 207-227 (IWFV…LWYV).

The protein belongs to the paxB family.

The protein localises to the membrane. Its pathway is secondary metabolite biosynthesis; terpenoid biosynthesis. In terms of biological role, terpene cyclase; part of the gene cluster that mediates the biosynthesis of the diterpenoid pyrones higginsianins A and B. The first step of the pathway is the synthesis of the alpha-pyrone moiety by the polyketide synthase dpchA via condensation of one acetyl-CoA starter unit with 3 malonyl-CoA units and 2 methylations. The alpha-pyrone is then combined with geranylgeranyl pyrophosphate (GGPP) formed by the GGPP synthase dpchD through the action of the prenyltransferase dpchC to yield a linear alpha-pyrone diterpenoid. Subsequent steps in the diterpenoid pyrone biosynthetic pathway involve the decalin core formation, which is initiated by the epoxidation of the C10-C11 olefin by the FAD-dependent oxidoreductase dpchE, and is followed by a cyclization cascade catalyzed by the terpene cyclase dpchB. The short chain dehydrogenase/reductase dpchG then oxidizes the 8S hydroxy group to a ketone and the short chain dehydrogenase/reductase dpchH reduces the ketone to the 8R hydroxy group to yield higginsianin B. Finally, the FAD-dependent oxidoreductase dpchF converts higginsianin B into higginsianin A. The protein is Terpene cyclase dpchB of Colletotrichum higginsianum (strain IMI 349063) (Crucifer anthracnose fungus).